A 308-amino-acid polypeptide reads, in one-letter code: Apolipoprotein E (308 aa).

The first 18 residues, 1 to 18 (MKFLWAALVVTLLAGCRA), serve as a signal peptide directing secretion. 8 tandem repeats follow at residues 75 to 96 (LLIE…KQVG), 97 to 118 (PIAQ…ARLE), 119 to 140 (SDME…AALG), 141 to 162 (QNTD…KRLL), 163 to 184 (RDAE…EAAE), 185 to 206 (RGVS…LQAI), 207 to 224 (PPSQ…QKVR), and 225 to 246 (GRLE…DQME). The segment at 75 to 246 (LLIEETMKEV…RLDDMRDQME (172 aa)) is 8 X 22 AA approximate tandem repeats. The interval 153–163 (HLRKLRKRLLR) is LDL and other lipoprotein receptors binding. 157 to 160 (LRKR) lines the heparin pocket. Residues 205-281 (AIPPSQQLRE…SWFEPLVQDM (77 aa)) form a lipid-binding and lipoprotein association region. 220 to 227 (GQKVRGRL) lines the heparin pocket. The tract at residues 257–308 (SQVRLQAEAFQTRLKSWFEPLVQDMQRQWASLVEKVQSTLGISPSTKPSKTK) is homooligomerization. Positions 269 to 281 (RLKSWFEPLVQDM) are specificity for association with VLDL.

It belongs to the apolipoprotein A1/A4/E family. In terms of assembly, homotetramer. May interact with ABCA1; functionally associated with ABCA1 in the biogenesis of HDLs. May interact with APP/A4 amyloid-beta peptide; the interaction is extremely stable in vitro but its physiological significance is unclear. May interact with MAPT. May interact with MAP2. In the cerebrospinal fluid, interacts with secreted SORL1. Interacts with PMEL; this allows the loading of PMEL luminal fragment on ILVs to induce fibril nucleation. In terms of processing, APOE exists as multiple glycosylated and sialylated glycoforms within cells and in plasma. The extent of glycosylation and sialylation are tissue and context specific. Post-translationally, glycated in plasma VLDL. Phosphorylated by FAM20C in the extracellular medium.

It localises to the secreted. Its subcellular location is the extracellular space. The protein resides in the extracellular matrix. The protein localises to the extracellular vesicle. It is found in the endosome. It localises to the multivesicular body. Functionally, APOE is an apolipoprotein, a protein associating with lipid particles, that mainly functions in lipoprotein-mediated lipid transport between organs via the plasma and interstitial fluids. APOE is a core component of plasma lipoproteins and is involved in their production, conversion and clearance. Apolipoproteins are amphipathic molecules that interact both with lipids of the lipoprotein particle core and the aqueous environment of the plasma. As such, APOE associates with chylomicrons, chylomicron remnants, very low density lipoproteins (VLDL) and intermediate density lipoproteins (IDL) but shows a preferential binding to high-density lipoproteins (HDL). It also binds a wide range of cellular receptors including the LDL receptor/LDLR and the very low-density lipoprotein receptor/VLDLR that mediate the cellular uptake of the APOE-containing lipoprotein particles. Finally, APOE also has a heparin-binding activity and binds heparan-sulfate proteoglycans on the surface of cells, a property that supports the capture and the receptor-mediated uptake of APOE-containing lipoproteins by cells. This chain is Apolipoprotein E (APOE), found in Pteropus vampyrus (Large flying fox).